The chain runs to 850 residues: Penicillin-binding protein 1A (850 aa).

Residues 1–5 lie on the Cytoplasmic side of the membrane; sequence MKFVK. A helical; Signal-anchor for type II membrane protein membrane pass occupies residues 6–26; sequence YFLILAVCCILLGAGSIYGLY. The Periplasmic segment spans residues 27–850; sequence RYIEPQLPDV…IDNGEAQELF (824 aa). The transglycosylase stretch occupies residues 48–216; that stretch reads MQIYSADGEL…STFNPLYSMD (169 aa). Glu-86 serves as the catalytic Proton donor; for transglycosylase activity. The segment at 400-710 is transpeptidase; it reads DVLQTGQQIW…GWRAGRDLQR (311 aa). Residue Ser-465 is the Acyl-ester intermediate; for transpeptidase activity of the active site.

This sequence in the N-terminal section; belongs to the glycosyltransferase 51 family. It in the C-terminal section; belongs to the transpeptidase family.

It is found in the cell inner membrane. It carries out the reaction [GlcNAc-(1-&gt;4)-Mur2Ac(oyl-L-Ala-gamma-D-Glu-L-Lys-D-Ala-D-Ala)](n)-di-trans,octa-cis-undecaprenyl diphosphate + beta-D-GlcNAc-(1-&gt;4)-Mur2Ac(oyl-L-Ala-gamma-D-Glu-L-Lys-D-Ala-D-Ala)-di-trans,octa-cis-undecaprenyl diphosphate = [GlcNAc-(1-&gt;4)-Mur2Ac(oyl-L-Ala-gamma-D-Glu-L-Lys-D-Ala-D-Ala)](n+1)-di-trans,octa-cis-undecaprenyl diphosphate + di-trans,octa-cis-undecaprenyl diphosphate + H(+). The enzyme catalyses Preferential cleavage: (Ac)2-L-Lys-D-Ala-|-D-Ala. Also transpeptidation of peptidyl-alanyl moieties that are N-acyl substituents of D-alanine.. It functions in the pathway cell wall biogenesis; peptidoglycan biosynthesis. Functionally, cell wall formation. Synthesis of cross-linked peptidoglycan from the lipid intermediates. The enzyme has a penicillin-insensitive transglycosylase N-terminal domain (formation of linear glycan strands) and a penicillin-sensitive transpeptidase C-terminal domain (cross-linking of the peptide subunits). The polypeptide is Penicillin-binding protein 1A (mrcA) (Escherichia coli (strain K12)).